A 758-amino-acid polypeptide reads, in one-letter code: Photosystem I P700 chlorophyll a apoprotein A1 (758 aa).

The next 8 membrane-spanning stretches (helical) occupy residues 78–101 (VFSAHFGQLSIIFLWLSGMYFHGA), 164–187 (LYCTAIGALVFAGLMLFAGWFHYH), 203–227 (LNHHLAGLLGLGSLSWARHQVHVSL), 299–317 (IAHHHLAIAILFLIAGHMY), 354–377 (WHAQLSINLAMLGSLTIVVAQHMY), 393–419 (LSLFTHHMWIGGFLIVGAAAHAAIFMV), 441–463 (AIISHLNWVCIFLGFHSFGLYIH), and 539–557 (FLVHHIHAFTIHVTVLILL). [4Fe-4S] cluster-binding residues include Cys-581 and Cys-590. Helical transmembrane passes span 597 to 618 (HVFLGLFWMYNSISVVIFHFSW) and 672 to 694 (LSAYGLFFLGAHFVWAFSLMFLF). His-683 is a chlorophyll a' binding site. Positions 691 and 699 each coordinate chlorophyll a. Trp-700 contributes to the phylloquinone binding site. Residues 732 to 753 (AVGVTHYLLGGIATTWAFFLAR) form a helical membrane-spanning segment.

This sequence belongs to the PsaA/PsaB family. The PsaA/B heterodimer binds the P700 chlorophyll special pair and subsequent electron acceptors. PSI consists of a core antenna complex that captures photons, and an electron transfer chain that converts photonic excitation into a charge separation. The eukaryotic PSI reaction center is composed of at least 11 subunits. P700 is a chlorophyll a/chlorophyll a' dimer, A0 is one or more chlorophyll a, A1 is one or both phylloquinones and FX is a shared 4Fe-4S iron-sulfur center. is required as a cofactor.

The protein resides in the plastid. It is found in the chloroplast thylakoid membrane. It carries out the reaction reduced [plastocyanin] + hnu + oxidized [2Fe-2S]-[ferredoxin] = oxidized [plastocyanin] + reduced [2Fe-2S]-[ferredoxin]. PsaA and PsaB bind P700, the primary electron donor of photosystem I (PSI), as well as the electron acceptors A0, A1 and FX. PSI is a plastocyanin-ferredoxin oxidoreductase, converting photonic excitation into a charge separation, which transfers an electron from the donor P700 chlorophyll pair to the spectroscopically characterized acceptors A0, A1, FX, FA and FB in turn. Oxidized P700 is reduced on the lumenal side of the thylakoid membrane by plastocyanin. In Pisum sativum (Garden pea), this protein is Photosystem I P700 chlorophyll a apoprotein A1.